The chain runs to 765 residues: Complement factor B (765 aa).

A signal peptide spans Met-1–Met-25. Sushi domains lie at Ser-35–Ala-100, Ile-101–Asp-160, and Gly-163–Asp-220. Disulfide bonds link Cys-37–Cys-76, Cys-62–Cys-98, Cys-103–Cys-145, Cys-131–Cys-158, Cys-165–Cys-205, and Cys-191–Cys-218. 2 N-linked (GlcNAc...) asparagine glycosylation sites follow: Asn-122 and Asn-142. One can recognise a VWFA domain in the interval Asn-270–Leu-469. Mg(2+) is bound by residues Ser-278 and Ser-280. The N-linked (GlcNAc...) asparagine glycan is linked to Asn-285. Thr-353 provides a ligand contact to Mg(2+). N-linked (GlcNAc...) asparagine glycosylation is present at Asn-378. One can recognise a Peptidase S1 domain in the interval Leu-477–Lys-758. 5 disulfide bridges follow: Cys-478–Cys-596, Cys-511–Cys-527, Cys-599–Cys-615, Cys-660–Cys-686, and Cys-699–Cys-729. Residues His-526 and Asp-576 each act as charge relay system in the active site. Ser-703 serves as the catalytic Charge relay system.

It belongs to the peptidase S1 family. In terms of assembly, monomer. Interacts with complement C3b; this interaction is dependent on the presence of Mg(2+). As to quaternary structure, catalytic component of the C3 convertase of the alternative complement pathway, also named C3bBb, composed of complement factor B Bb and complement C3b. Catalytic component of the C5 convertase of the alternative complement pathway, also named C3bBb3b, composed of complement factor B Bb and additional molecules of complement C3b. Interacts to CFP; this interaction contributes to the stabilization of the active C3-convertase enzyme complex. It depends on Mg(2+) as a cofactor. Requires Mn(2+) as cofactor. Post-translationally, cleaved by CFD following activation of the alternative complement system, generating Ba and Bb chains. Cleavage and activation takes place when CFB is already associated with complement C3b.

The protein localises to the secreted. The protein resides in the cell surface. The catalysed reaction is Cleavage of Arg-|-Ser bond in complement component C3 alpha-chain to yield C3a and C3b, and Arg-|-Xaa bond in complement component C5 alpha-chain to yield C5a and C5b.. Precursor of the catalytic component of the C3 and C5 convertase complexes of the alternative pathway of the complement system, a cascade of proteins that leads to phagocytosis and breakdown of pathogens and signaling that strengthens the adaptive immune system. The alternative complement pathway acts as an amplification loop that enhances other complement pathways (classical, lectin and GZMK) by promoting formation of additional C3 and C5 convertases. CFB is cleaved and activated by CFD to generate Ba and Bb chains; Bb chain constituting the catalytic component of the C3 and C5 convertases. Functionally, serine protease component of the complement C3 and C5 convertase complexes of the alternative complement pathway. Following cleavage and activation by factor D (CFD), forms the C3 convertase together with complement C3b. As part of the C3 convertase, cleaves and activates C3 into C3a anaphylatoxin and C3b opsonin, the next components of the complement pathways. When an additional complement C3b molecule binds to the C3 convertase, forms the C5 convertase, which cleaves and activates C5 into C5a anaphylatoxin and C5b component of the membrane attack complex. Its function is as follows. Involved in proliferation and differentiation of preactivated B-lymphocytes, rapid spreading of peripheral blood monocytes, stimulation of lymphocyte blastogenesis and lysis of erythrocytes. The chain is Complement factor B (CFB) from Sus scrofa (Pig).